The following is a 231-amino-acid chain: MLKKEESLMNIAKMIDHTLLKPNATKEEIKKVCEEAREYGFASVCINPCFVDLAYEMLKDTDVKVCTVVGFPLGANTIETKVVEAVEAVKKGATEIDMVLNISMLKSGEYDYVKKEIGEVVKAVKSHGDIVVKVILETCYLSDEEKIKACEISKEAGADFVKTSTGFGPGGATVEDVKLMRKVVGENFGVKASGGIRSYEDAKAMIEAGANRIGASAGVKIVEEWKKQGLG.

The active-site Proton donor/acceptor is the Asp-97. Lys-162 (schiff-base intermediate with acetaldehyde) is an active-site residue. Lys-191 functions as the Proton donor/acceptor in the catalytic mechanism.

This sequence belongs to the DeoC/FbaB aldolase family. DeoC type 1 subfamily.

It localises to the cytoplasm. The catalysed reaction is 2-deoxy-D-ribose 5-phosphate = D-glyceraldehyde 3-phosphate + acetaldehyde. Its pathway is carbohydrate degradation; 2-deoxy-D-ribose 1-phosphate degradation; D-glyceraldehyde 3-phosphate and acetaldehyde from 2-deoxy-alpha-D-ribose 1-phosphate: step 2/2. In terms of biological role, catalyzes a reversible aldol reaction between acetaldehyde and D-glyceraldehyde 3-phosphate to generate 2-deoxy-D-ribose 5-phosphate. In Caldanaerobacter subterraneus subsp. tengcongensis (strain DSM 15242 / JCM 11007 / NBRC 100824 / MB4) (Thermoanaerobacter tengcongensis), this protein is Deoxyribose-phosphate aldolase.